Consider the following 451-residue polypeptide: Trimethylamine monooxygenase (451 aa).

6 residues coordinate FAD: S12, E37, Q39, L45, W46, and H62. NADP(+)-binding residues include W70 and N72. Residues N72 and V125 each coordinate FAD. NADP(+) contacts are provided by S204, S205, S207, and R228. 2 residues coordinate FAD: Q317 and T320. Position 411 (R411) interacts with NADP(+).

This sequence belongs to the FMO family. It depends on FAD as a cofactor.

The enzyme catalyses trimethylamine + NADPH + O2 = trimethylamine N-oxide + NADP(+) + H2O. Functionally, catalyzes the oxidation of trimethylamine (TMA) to produce trimethylamine N-oxide (TMAO). In vitro, has a broad substrate specificity, oxidizing many nitrogen- and sulfur-containing compounds, including dimethylamine (DMA), dimethylsulfide (DMS), dimethylsulfoxide (DMSO), cysteamine, methimazole and dimethylaniline. This is Trimethylamine monooxygenase from Methylocella silvestris (strain DSM 15510 / CIP 108128 / LMG 27833 / NCIMB 13906 / BL2).